Reading from the N-terminus, the 285-residue chain is GTP-binding protein 8 (285 aa).

In terms of domain architecture, EngB-type G spans 110–283; the sequence is RQPEVCFIGR…KCFIADITGS (174 aa). GTP-binding positions include 118-125, 147-151, 165-168, 227-230, and 262-264; these read GRSNVGKS, GHTKK, DMPG, TKID, and ISA. 2 residues coordinate Mg(2+): serine 125 and threonine 149.

Belongs to the TRAFAC class TrmE-Era-EngA-EngB-Septin-like GTPase superfamily. EngB GTPase family. Mg(2+) serves as cofactor.

This chain is GTP-binding protein 8 (Gtpbp8), found in Rattus norvegicus (Rat).